The primary structure comprises 249 residues: Adapter protein MecA (249 aa).

This sequence belongs to the MecA family. As to quaternary structure, homodimer.

Functionally, enables the recognition and targeting of unfolded and aggregated proteins to the ClpC protease or to other proteins involved in proteolysis. The protein is Adapter protein MecA of Streptococcus thermophilus (strain ATCC BAA-491 / LMD-9).